The sequence spans 869 residues: Valine--tRNA ligase (869 aa).

The short motif at 47 to 57 (PYPTGNFHIGN) is the 'HIGH' region element. The 'KMSKS' region motif lies at 521 to 525 (KMSKS). Lys-524 provides a ligand contact to ATP.

It belongs to the class-I aminoacyl-tRNA synthetase family. ValS type 2 subfamily.

It is found in the cytoplasm. It carries out the reaction tRNA(Val) + L-valine + ATP = L-valyl-tRNA(Val) + AMP + diphosphate. Functionally, catalyzes the attachment of valine to tRNA(Val). As ValRS can inadvertently accommodate and process structurally similar amino acids such as threonine, to avoid such errors, it has a 'posttransfer' editing activity that hydrolyzes mischarged Thr-tRNA(Val) in a tRNA-dependent manner. The sequence is that of Valine--tRNA ligase from Methanosarcina barkeri (strain Fusaro / DSM 804).